A 322-amino-acid polypeptide reads, in one-letter code: N-acetyl-gamma-glutamyl-phosphate reductase (322 aa).

C132 is an active-site residue.

It belongs to the NAGSA dehydrogenase family. Type 1 subfamily.

It localises to the cytoplasm. It catalyses the reaction N-acetyl-L-glutamate 5-semialdehyde + phosphate + NADP(+) = N-acetyl-L-glutamyl 5-phosphate + NADPH + H(+). It functions in the pathway amino-acid biosynthesis; L-arginine biosynthesis; N(2)-acetyl-L-ornithine from L-glutamate: step 3/4. In terms of biological role, catalyzes the NADPH-dependent reduction of N-acetyl-5-glutamyl phosphate to yield N-acetyl-L-glutamate 5-semialdehyde. In Bacteroides thetaiotaomicron (strain ATCC 29148 / DSM 2079 / JCM 5827 / CCUG 10774 / NCTC 10582 / VPI-5482 / E50), this protein is N-acetyl-gamma-glutamyl-phosphate reductase.